A 611-amino-acid chain; its full sequence is Creatine transporter (611 aa).

Residues 45–65 form a helical membrane-spanning segment; that stretch reads FIMSCVGFAVGLGNVWRFPYL. At 66–71 the chain is on the extracellular side; it reads CYKNGG. The chain crosses the membrane as a helical span at residues 72 to 92; that stretch reads GVFLIPYLLVAVFGGIPIFFL. The Cytoplasmic segment spans residues 93 to 122; it reads EISLGQFMKAGGINAWNIAPLFKGLGYASM. A helical transmembrane segment spans residues 123–143; it reads VIVFFCNTYYILVLTWSSFYL. Topologically, residues 144-207 are extracellular; sequence VQSFSSPLPW…LSSGLGDVGE (64 aa). N157 and N171 each carry an N-linked (GlcNAc...) asparagine glycan. A helical transmembrane segment spans residues 208-228; the sequence is IGWELTLCLTATWMLVYFCIW. Topologically, residues 229–246 are cytoplasmic; the sequence is KGVKTSGKVVYVTATFPY. The chain crosses the membrane as a helical span at residues 247–267; the sequence is IILVILLVRGVTLHGAVQGIV. Residues 268-281 lie on the Extracellular side of the membrane; the sequence is YYLQPDWGKLGEAQ. A helical transmembrane segment spans residues 282-302; sequence VWIDAGTQIFFSYAIGLGTLT. The Cytoplasmic portion of the chain corresponds to 303-318; that stretch reads ALGSYNQLHNDCYKDA. A helical membrane pass occupies residues 319–339; it reads FILSLVNSATSFFAGLVVFSI. The Extracellular segment spans residues 340 to 371; it reads LGFMAVEEGVDISVVAESGPGLAFIAYPKAVT. A helical transmembrane segment spans residues 372–392; that stretch reads LMPFPQVWAVLFFIMLLCLGL. At 393-421 the chain is on the cytoplasmic side; sequence GSQFVGVEGFVTAILDLWPSKFSFRYLRE. The helical transmembrane segment at 422 to 442 threads the bilayer; it reads VVVAMVICLSFLIDLSMITEG. Residues 443–456 are Extracellular-facing; it reads GMYIFQIFDYYSAS. The helical transmembrane segment at 457–477 threads the bilayer; that stretch reads GTTLLWTAFWECVAVAWVYGG. Over 478 to 497 the chain is Cytoplasmic; that stretch reads DRYLDDLAWMLGYRPWALVK. Residues 498 to 518 form a helical membrane-spanning segment; it reads WCWSVITPLVCMGIFTFHLVN. At 519–537 the chain is on the extracellular side; it reads YKPLTYNKTYTYPWWGEAI. Residue N525 is glycosylated (N-linked (GlcNAc...) asparagine). Residues 538-558 traverse the membrane as a helical segment; sequence GWCLALASMLCVPTTVLYSLS. Residues 559 to 611 are Cytoplasmic-facing; the sequence is RGRGSLKERWRKLTTPVWASHHLAYKMAGAKINQPCEGVVSCEEKVVIFESVL.

This sequence belongs to the sodium:neurotransmitter symporter (SNF) (TC 2.A.22) family.

It is found in the membrane. Required for the uptake of creatine. The polypeptide is Creatine transporter (Torpedo marmorata (Marbled electric ray)).